Reading from the N-terminus, the 353-residue chain is MSEQKVVICKDLKSELQDFLSSLKYDKLFILMDTNTKEKCFPLVEDIPAFQKAPILVMEAGDMNKGFVSLAQIWTALSNEGASRNSLLVNLGGGMITDMGGFAGATFKRGIRTINIPTTLMASVDAAVGGKTGINFNGLKNEVGSFYPPLCVFIDCDFLRTLDRDNILSGYAEMIKHGLISSMENYASVMLFDIDTMNYSYLNSLVGQSVAVKERIVEEDPKEQGIRKALNFGHTIGHAFESLSFLKMRPILHGHAVAAGIVSELYLSHKLCGFPMEKLSQVVYYIKEYYPALFFDCTDYDTLYELMTHDKKNEGGIINFTLLKNVGDVRINQSVTKEKILESLDFYRESFGI.

Residues 60–65, 94–98, 118–119, K131, and K140 contribute to the NAD(+) site; these read AGDMNK, GMITD, and TT. Zn(2+) contacts are provided by E173, H234, and H253.

Belongs to the sugar phosphate cyclases superfamily. Dehydroquinate synthase family. Requires NAD(+) as cofactor. The cofactor is Co(2+). Zn(2+) is required as a cofactor.

The protein resides in the cytoplasm. It carries out the reaction 7-phospho-2-dehydro-3-deoxy-D-arabino-heptonate = 3-dehydroquinate + phosphate. It functions in the pathway metabolic intermediate biosynthesis; chorismate biosynthesis; chorismate from D-erythrose 4-phosphate and phosphoenolpyruvate: step 2/7. Catalyzes the conversion of 3-deoxy-D-arabino-heptulosonate 7-phosphate (DAHP) to dehydroquinate (DHQ). This is 3-dehydroquinate synthase from Parabacteroides distasonis (strain ATCC 8503 / DSM 20701 / CIP 104284 / JCM 5825 / NCTC 11152).